Reading from the N-terminus, the 115-residue chain is Cysteine-rich venom protein 5 (115 aa).

A signal peptide spans 1–22; the sequence is MSKVMIIMLVGMIFAIISTVSG. 3 disulfides stabilise this stretch: C26–C41, C33–C44, and C40–C51. Residues 54-115 form a disordered region; that stretch reads RIGPPINTQP…RKPTNRPRSH (62 aa). 2 stretches are compositionally biased toward basic residues: residues 68-77 and 86-115; these read QPTRRTRGPK and NRTR…PRSH.

In terms of tissue distribution, expressed by the venom gland.

The protein localises to the secreted. The sequence is that of Cysteine-rich venom protein 5 from Pimpla hypochondriaca (Parasitoid wasp).